The sequence spans 159 residues: 18.0 kDa class I heat shock protein (159 aa).

The sHSP domain maps to E45–G159.

Belongs to the small heat shock protein (HSP20) family. In terms of assembly, forms oligomeric structures.

It is found in the cytoplasm. In Daucus carota (Wild carrot), this protein is 18.0 kDa class I heat shock protein.